A 145-amino-acid polypeptide reads, in one-letter code: MSMSTPQKAILPPFNADILPLGLYVAATVLLIGILLLAAWWLGDKKRSAAKEIAYESGVIPTGTARLAYPVPFYLVAIFFIVFDVEAVFIFTWAVAWDELGFPGLIHITAFIIVLLLGLVWLWLKGGLEWGPSKQVRRSKFEVRS.

A run of 3 helical transmembrane segments spans residues 18–38 (ILPL…LLLA), 71–91 (VPFY…VFIF), and 104–124 (GLIH…WLWL).

The protein belongs to the complex I subunit 3 family. In terms of assembly, NDH-1 is composed of 14 different subunits. Subunits NuoA, H, J, K, L, M, N constitute the membrane sector of the complex.

It is found in the cell inner membrane. It catalyses the reaction a quinone + NADH + 5 H(+)(in) = a quinol + NAD(+) + 4 H(+)(out). NDH-1 shuttles electrons from NADH, via FMN and iron-sulfur (Fe-S) centers, to quinones in the respiratory chain. The immediate electron acceptor for the enzyme in this species is believed to be ubiquinone. Couples the redox reaction to proton translocation (for every two electrons transferred, four hydrogen ions are translocated across the cytoplasmic membrane), and thus conserves the redox energy in a proton gradient. This Geotalea uraniireducens (strain Rf4) (Geobacter uraniireducens) protein is NADH-quinone oxidoreductase subunit A 1.